Reading from the N-terminus, the 58-residue chain is Small ribosomal subunit protein bS21 (58 aa).

Positions serine 30–lysine 58 are disordered. Over residues glutamate 31–serine 42 the composition is skewed to basic and acidic residues. Residues valine 43–lysine 58 show a composition bias toward basic residues.

Belongs to the bacterial ribosomal protein bS21 family.

The sequence is that of Small ribosomal subunit protein bS21 from Clostridium perfringens (strain ATCC 13124 / DSM 756 / JCM 1290 / NCIMB 6125 / NCTC 8237 / Type A).